Consider the following 107-residue polypeptide: MLRRDKKRESRIARERVFYLIKRAEEWKNIDYELARRYVELARKIAMRYRVRIPRELKATYCKKCLYPYKAGKFRVRVRKSRVIITCLNCGFERRIPIRPKRVNRKV.

Zn(2+)-binding residues include cysteine 62, cysteine 65, cysteine 87, and cysteine 90.

The protein belongs to the eukaryotic/archaeal RNase P protein component 4 family. As to quaternary structure, consists of a catalytic RNA component and at least 4-5 protein subunits. Requires Zn(2+) as cofactor.

It localises to the cytoplasm. It carries out the reaction Endonucleolytic cleavage of RNA, removing 5'-extranucleotides from tRNA precursor.. Part of ribonuclease P, a protein complex that generates mature tRNA molecules by cleaving their 5'-ends. This Archaeoglobus fulgidus (strain ATCC 49558 / DSM 4304 / JCM 9628 / NBRC 100126 / VC-16) protein is Ribonuclease P protein component 4.